The chain runs to 94 residues: YcgL domain-containing protein VP0875 (94 aa).

The 84-residue stretch at 1–84 (MLCSIYKSSK…PPENLLEKYK (84 aa)) folds into the YcgL domain.

The sequence is that of YcgL domain-containing protein VP0875 from Vibrio parahaemolyticus serotype O3:K6 (strain RIMD 2210633).